Consider the following 1811-residue polypeptide: Protein virilizer homolog (1811 aa).

Residue alanine 2 is modified to N-acetylalanine. Residues 132 to 302 (ISHDRDSPPP…EGDDGYEQIS (171 aa)) are disordered. 2 positions are modified to phosphoserine: serine 133 and serine 138. The span at 139 to 152 (PPPPPPPPPPPQPQ) shows a compositional bias: pro residues. Basic and acidic residues predominate over residues 160–169 (KHADGEKEDQ). A Phosphoserine modification is found at serine 173. Over residues 174-190 (PPRPQPRGPRTPPGPPP) the composition is skewed to pro residues. Threonine 184 is subject to Phosphothreonine. Serine 222 is subject to Phosphoserine. The span at 224 to 233 (DRNSVPQEGQ) shows a compositional bias: polar residues. 2 stretches are compositionally biased toward acidic residues: residues 234 to 267 (YSDEGEVEEEPQEEGEDDEDDVDVEEEEDEDEDD) and 274 to 302 (IPDDEEEDEEEEGEEDEEGEGDDGYEQIS). The residue at position 913 (tyrosine 913) is a Phosphotyrosine. Serine 1578 carries the phosphoserine modification. 2 disordered regions span residues 1615–1634 (HVVPPPRGRGRGGFGQGIRP) and 1662–1811 (KEVV…SFTR). Positions 1688–1697 (GFSGNRGGRG) are enriched in gly residues. Threonine 1707 carries the post-translational modification Phosphothreonine. Residue arginine 1722 is modified to Omega-N-methylarginine. The span at 1722–1747 (RGSSWSAQNTPRGNYNESRGGQSNFN) shows a compositional bias: polar residues. At arginine 1740 the chain carries Asymmetric dimethylarginine; alternate. Position 1740 is an omega-N-methylarginine; alternate (arginine 1740). Arginine 1772, arginine 1774, and arginine 1792 each carry asymmetric dimethylarginine. The span at 1787-1801 (GSGGSRGKFVSGGSG) shows a compositional bias: gly residues. A compositionally biased stretch (basic residues) spans 1802–1811 (RGRHVRSFTR).

Belongs to the vir family. Component of the WMM complex, a N6-methyltransferase complex composed of a catalytic subcomplex, named MAC, and of an associated subcomplex, named MACOM. The MAC subcomplex is composed of METTL3 and METTL14. The MACOM subcomplex is composed of WTAP, ZC3H13, CBLL1/HAKAI, VIRMA, and, in some cases of RBM15 (RBM15 or RBM15B). Interacts with WTAP. Also a component of a MACOM-like complex, named WTAP complex, composed of WTAP, ZC3H13, CBLL1, VIRMA, RBM15, BCLAF1 and THRAP3. Interacts with NUDT21 and CPSF6.

The protein resides in the nucleus speckle. Its subcellular location is the nucleus. The protein localises to the nucleoplasm. It is found in the cytoplasm. Associated component of the WMM complex, a complex that mediates N6-methyladenosine (m6A) methylation of RNAs, a modification that plays a role in the efficiency of mRNA splicing and RNA processing. Acts as a key regulator of m6A methylation by promoting m6A methylation of mRNAs in the 3'-UTR near the stop codon: recruits the catalytic core components METTL3 and METTL14, thereby guiding m6A methylation at specific sites. Required for mRNA polyadenylation via its role in selective m6A methylation: m6A methylation of mRNAs in the 3'-UTR near the stop codon correlating with alternative polyadenylation (APA). The chain is Protein virilizer homolog from Mus musculus (Mouse).